The primary structure comprises 271 residues: Shikimate dehydrogenase (NADP(+)) (271 aa).

Shikimate contacts are provided by residues serine 14 to serine 16 and threonine 61. Catalysis depends on lysine 65, which acts as the Proton acceptor. Positions 86 and 101 each coordinate shikimate. NADP(+)-binding positions include glycine 125–alanine 129 and isoleucine 212. Shikimate is bound at residue tyrosine 214. Glycine 235 contacts NADP(+).

It belongs to the shikimate dehydrogenase family. As to quaternary structure, homodimer.

It carries out the reaction shikimate + NADP(+) = 3-dehydroshikimate + NADPH + H(+). Its pathway is metabolic intermediate biosynthesis; chorismate biosynthesis; chorismate from D-erythrose 4-phosphate and phosphoenolpyruvate: step 4/7. In terms of biological role, involved in the biosynthesis of the chorismate, which leads to the biosynthesis of aromatic amino acids. Catalyzes the reversible NADPH linked reduction of 3-dehydroshikimate (DHSA) to yield shikimate (SA). The sequence is that of Shikimate dehydrogenase (NADP(+)) from Clostridium perfringens (strain SM101 / Type A).